A 163-amino-acid chain; its full sequence is Nucleotide-binding protein BSU11020 (163 aa).

Belongs to the YajQ family.

Nucleotide-binding protein. The chain is Nucleotide-binding protein BSU11020 (yitK) from Bacillus subtilis (strain 168).